A 1118-amino-acid chain; its full sequence is Collagenase ColG (1118 aa).

The first 45 residues, 1–45 (MKKNILKILMDSYSKESKIQTVRRVTSVSLLAVYLTMNTSSLVLA), serve as a signal peptide directing secretion. Residues 46 to 110 (KPIENTNDTS…KSKSTLRSAS (65 aa)) constitute a propeptide that is removed on maturation. The tract at residues 111–786 (IANTNSEKYD…QYDVVFHGVL (676 aa)) is S1 metalloprotease domain, degrades both FALGPA (furylacryloyl-Leu-Gly-Pro-Ala) and type I collagen. Positions 119 to 388 (YDFEYLNGLS…AMERITWDYD (270 aa)) are activator domain required for full activity on collagen. The catalytic subdomain stretch occupies residues 389 to 670 (GIGSNGKKVD…IQELADKYQG (282 aa)). Residues 396-1118 (KVDHDKFLDD…SGNYELRVNK (723 aa)) form a degrades soluble FALGPA peptide (furylacryloyl-Leu-Gly-Pro-Ala) but not type I collagen region. Glu498 contacts Ca(2+). A Zn(2+)-binding site is contributed by His523. Residue Glu524 is part of the active site. Residue His527 coordinates Zn(2+). 3 residues coordinate Ca(2+): Ala531, Val535, and Gly537. Glu555 is a Zn(2+) binding site. The tract at residues 679–790 (DYLKDHGYKK…VFHGVLTDNA (112 aa)) is helper subdomain. Residues 787 to 882 (TDNADISNNK…SFTIEIKNED (96 aa)) form an S2 domain region. Ca(2+) contacts are provided by Asn795, Lys796, Asp823, Asp825, Asp864, Glu890, Glu892, Asn894, Asp913, Asp918, Ala920, Asp921, Glu1009, Glu1011, Asn1013, Asp1014, Ser1032, Asp1037, Arg1039, and Asp1040. The PKD domain maps to 797–885 (APIAKVTGPS…IEIKNEDTTT (89 aa)). Residues 886-1003 (PITKEMEPND…SYSLNIKGLG (118 aa)) are S3a collagen-binding domain. An S3b collagen-binding domain region spans residues 1008-1118 (KEKENNDSSD…SGNYELRVNK (111 aa)). The segment at 1102 to 1106 (LVYKY) is collagen-binding.

This sequence belongs to the peptidase M9B family. Collagenase subfamily. Ca(2+) is required as a cofactor. The cofactor is Zn(2+). Upon purification gives 67 kDa, 78 kDa, 82 kDa and 116 kDa (full-length) proteins all of which have the same N-terminus; only the longest form digests insoluble collagen. At least 2 in vivo isolated forms (C1b and C1c) are missing the second collagen-binding domain, ending on Lys-1006 and Lys-1018 respectively.

The protein localises to the secreted. It catalyses the reaction Digestion of native collagen in the triple helical region at Xaa-|-Gly bonds. With synthetic peptides, a preference is shown for Gly at P3 and P1', Pro and Ala at P2 and P2', and hydroxyproline, Ala or Arg at P3'.. With respect to regulation, inhibited by 1-10-phenanthroline. Inhibited by peptidomimetic isoamyl-phosphonyl-Gly-Pro-Ala, which binds to Zn(2+). Inhibited by broad-spectrum zinc metalloprotease inhibitor batimastat. N-aryl mercaptoacetamide-based inhibitors have been isolated that act on clostridial collagenases with submicromolar affinity while having negligibile activity on human collagenases. Clostridial collagenases are among the most efficient degraders of eukaryotic collagen known; saprophytes use collagen as a carbon source while pathogens additionally digest collagen to aid in host colonization. Has both tripeptidylcarboxypeptidase on Gly-X-Y and endopeptidase activities; the endopeptidase cuts within the triple helix region of collagen while tripeptidylcarboxypeptidase successively digests the exposed ends, thus clostridial collagenases can digest large sections of collagen. Active on soluble type I collagen, insoluble collagen, azocoll, soluble PZ-peptide (all collagenase substrates) and gelatin. The full-length protein has collagenase activity, while the in vivo derived C-terminally truncated shorter versions only act on gelatin. In vitro digestion of soluble calf skin collagen fibrils requires both ColG and ColH; ColG forms missing the second collagen-binding domain are also synergistic with ColH, although their overall efficiency is decreased. The activator domain (residues 119-388) and catalytic subdomain (389-670) open and close around substrate using a Gly-rich hinge (387-397), allowing digestion when the protein is closed. Binding of collagen requires Ca(2+) and is inhibited by EGTA; the collagen-binding domain (CBD, S3a plus S3b) specifically recognizes the triple-helical conformation made by 3 collagen protein chains in the triple-helical region. Isolated CBD (S3a plus S3b) binds collagen fibrils and sheets of many tissues. This chain is Collagenase ColG, found in Hathewaya histolytica (Clostridium histolyticum).